The chain runs to 378 residues: Erythronate-4-phosphate dehydrogenase (378 aa).

Serine 45 and threonine 66 together coordinate substrate. Residues aspartate 146 and threonine 175 each contribute to the NAD(+) site. The active site involves arginine 208. Aspartate 232 is a binding site for NAD(+). Residue glutamate 237 is part of the active site. The active-site Proton donor is histidine 254. Position 257 (glycine 257) interacts with NAD(+). Position 258 (tyrosine 258) interacts with substrate.

This sequence belongs to the D-isomer specific 2-hydroxyacid dehydrogenase family. PdxB subfamily. Homodimer.

The protein localises to the cytoplasm. It catalyses the reaction 4-phospho-D-erythronate + NAD(+) = (R)-3-hydroxy-2-oxo-4-phosphooxybutanoate + NADH + H(+). It functions in the pathway cofactor biosynthesis; pyridoxine 5'-phosphate biosynthesis; pyridoxine 5'-phosphate from D-erythrose 4-phosphate: step 2/5. Its function is as follows. Catalyzes the oxidation of erythronate-4-phosphate to 3-hydroxy-2-oxo-4-phosphonooxybutanoate. The chain is Erythronate-4-phosphate dehydrogenase from Shigella dysenteriae serotype 1 (strain Sd197).